A 353-amino-acid polypeptide reads, in one-letter code: RNA 3'-terminal phosphate cyclase (353 aa).

ATP-binding positions include Gln100 and His285–Gln289. The active-site Tele-AMP-histidine intermediate is the His311.

This sequence belongs to the RNA 3'-terminal cyclase family. Type 1 subfamily.

It is found in the cytoplasm. The catalysed reaction is a 3'-end 3'-phospho-ribonucleotide-RNA + ATP = a 3'-end 2',3'-cyclophospho-ribonucleotide-RNA + AMP + diphosphate. Functionally, catalyzes the conversion of 3'-phosphate to a 2',3'-cyclic phosphodiester at the end of RNA. The mechanism of action of the enzyme occurs in 3 steps: (A) adenylation of the enzyme by ATP; (B) transfer of adenylate to an RNA-N3'P to produce RNA-N3'PP5'A; (C) and attack of the adjacent 2'-hydroxyl on the 3'-phosphorus in the diester linkage to produce the cyclic end product. The biological role of this enzyme is unknown but it is likely to function in some aspects of cellular RNA processing. This is RNA 3'-terminal phosphate cyclase from Nitrosospira multiformis (strain ATCC 25196 / NCIMB 11849 / C 71).